Reading from the N-terminus, the 193-residue chain is dTTP/UTP pyrophosphatase (193 aa).

Asp-71 (proton acceptor) is an active-site residue.

Belongs to the Maf family. YhdE subfamily. It depends on a divalent metal cation as a cofactor.

Its subcellular location is the cytoplasm. The enzyme catalyses dTTP + H2O = dTMP + diphosphate + H(+). The catalysed reaction is UTP + H2O = UMP + diphosphate + H(+). In terms of biological role, nucleoside triphosphate pyrophosphatase that hydrolyzes dTTP and UTP. May have a dual role in cell division arrest and in preventing the incorporation of modified nucleotides into cellular nucleic acids. The polypeptide is dTTP/UTP pyrophosphatase (Dictyoglomus turgidum (strain DSM 6724 / Z-1310)).